Reading from the N-terminus, the 265-residue chain is Early E4 31 kDa protein (265 aa).

The protein belongs to the adenoviridae E4 30 to 34 kDa protein family. In terms of assembly, interacts with E1B-55k.

It is found in the host nucleus. Its subcellular location is the host cytoplasm. In terms of biological role, plays a major role to prevent cellular inhibition of viral genome replication by nuclear bodies. Assembles an SCF-like E3 ubiquitin ligase complex based on the cellular proteins ELOB, ELOC, CUL5 and RBX1, in cooperation with viral E1B-55K. This viral RING-type ligase ubiquitinates cellular substrates prior to proteasomal degradation: p53/TP53, LIG4, MRE11-RAD50-NBS1 (MRN) complex, ITGA3, DAXX and BLM. The sequence is that of Early E4 31 kDa protein from Canine adenovirus serotype 1 (strain RI261) (CAdV-1).